Reading from the N-terminus, the 320-residue chain is Lipoyl synthase (320 aa).

[4Fe-4S] cluster is bound by residues Cys67, Cys72, Cys78, Cys93, Cys97, Cys100, and Ser307. The region spanning 79-296 (FNHGTATFMI…RTKAEVMGFE (218 aa)) is the Radical SAM core domain.

This sequence belongs to the radical SAM superfamily. Lipoyl synthase family. The cofactor is [4Fe-4S] cluster.

It is found in the cytoplasm. The enzyme catalyses [[Fe-S] cluster scaffold protein carrying a second [4Fe-4S](2+) cluster] + N(6)-octanoyl-L-lysyl-[protein] + 2 oxidized [2Fe-2S]-[ferredoxin] + 2 S-adenosyl-L-methionine + 4 H(+) = [[Fe-S] cluster scaffold protein] + N(6)-[(R)-dihydrolipoyl]-L-lysyl-[protein] + 4 Fe(3+) + 2 hydrogen sulfide + 2 5'-deoxyadenosine + 2 L-methionine + 2 reduced [2Fe-2S]-[ferredoxin]. It participates in protein modification; protein lipoylation via endogenous pathway; protein N(6)-(lipoyl)lysine from octanoyl-[acyl-carrier-protein]: step 2/2. Functionally, catalyzes the radical-mediated insertion of two sulfur atoms into the C-6 and C-8 positions of the octanoyl moiety bound to the lipoyl domains of lipoate-dependent enzymes, thereby converting the octanoylated domains into lipoylated derivatives. This chain is Lipoyl synthase, found in Mannheimia succiniciproducens (strain KCTC 0769BP / MBEL55E).